The sequence spans 222 residues: Superoxide dismutase [Mn], mitochondrial (222 aa).

Residues 1–24 constitute a mitochondrion transit peptide; sequence MLSRAVCGTSRQLAPVLGYLGSRQ. His50 provides a ligand contact to Mn(2+). 3'-nitrotyrosine is present on Tyr58. 2 positions are modified to N6-acetyllysine; alternate: Lys68 and Lys75. 2 positions are modified to N6-succinyllysine; alternate: Lys68 and Lys75. Position 98 (His98) interacts with Mn(2+). Lys114 is modified (N6-acetyllysine). Lys122 and Lys130 each carry N6-acetyllysine; alternate. N6-succinyllysine; alternate occurs at positions 122 and 130. Mn(2+) is bound by residues Asp183 and His187. Lys202 is subject to N6-acetyllysine.

Belongs to the iron/manganese superoxide dismutase family. Homotetramer. Mn(2+) serves as cofactor. In terms of processing, nitrated under oxidative stress. Nitration coupled with oxidation inhibits the catalytic activity. Acetylation at Lys-122 decreases enzymatic activity. Deacetylated by SIRT3 upon exposure to ionizing radiations or after long fasting. Post-translationally, polyubiquitinated; leading to proteasomal degradation. Deubiquitinated by USP36 which increases protein stability.

The protein resides in the mitochondrion matrix. The catalysed reaction is 2 superoxide + 2 H(+) = H2O2 + O2. Its function is as follows. Destroys superoxide anion radicals which are normally produced within the cells and which are toxic to biological systems. This chain is Superoxide dismutase [Mn], mitochondrial (SOD2), found in Homo sapiens (Human).